A 289-amino-acid chain; its full sequence is MKWLIFGNKGWIGSMVSKILEQQGEQVVGAQSRADDESAVEREISEIKPDRVMSFIGRTHGPGYSTIDYLEQSGKLVENVKDNLYGPLCLAFICQKYNIHLTYLGTGCIFEGQNNFSADEKGFTENDKPNFFGSSYSVVKGFTDRLMHFFDNDVLNLRIRMPITIEQNPRSFITKILSYSRICSIPNSMTILDQMIPVMIDMARNKTTGTFNFTNPGLVSHNEILSLIRDIHKPNLTWENMSREQQLAILKADRSNNLLNTDKLQSLYPDVPDILTGIREVVSKMKFQQ.

This is an uncharacterized protein from Acanthamoeba polyphaga mimivirus (APMV).